The sequence spans 470 residues: Argininosuccinate lyase (470 aa).

The protein belongs to the lyase 1 family. Argininosuccinate lyase subfamily.

Its subcellular location is the cytoplasm. The catalysed reaction is 2-(N(omega)-L-arginino)succinate = fumarate + L-arginine. The protein operates within amino-acid biosynthesis; L-arginine biosynthesis; L-arginine from L-ornithine and carbamoyl phosphate: step 3/3. In Leptospira borgpetersenii serovar Hardjo-bovis (strain L550), this protein is Argininosuccinate lyase.